A 554-amino-acid chain; its full sequence is Intraflagellar transport protein 56 (554 aa).

Residues 1–24 form a disordered region; that stretch reads MMLSRAKPAVGRGVQHTDKRKKKG. 4 TPR repeats span residues 57-90, 92-125, 151-184, and 468-501; these read EDTN…ENCN, EVWV…LQNR, TEDQ…NREY, and ANDC…EGKR.

It belongs to the IFT56 family. In terms of assembly, component of the IFT complex B. Interacts with IFT46; the interaction is direct.

It is found in the cell projection. It localises to the cilium. Component of the intraflagellar transport (IFT) complex B required for transport of proteins in the motile cilium. Required for transport of specific ciliary cargo proteins related to motility, while it is neither required for IFT complex B assembly or motion nor for cilium assembly. Required for efficient coupling between the accumulation of GLI2 and GLI3 at the ciliary tips and their dissociation from the negative regulator SUFU. Plays a key role in maintaining the integrity of the IFT complex B and the proper ciliary localization of the IFT complex B components. Not required for IFT complex A ciliary localization or function. Essential for maintaining proper microtubule organization within the ciliary axoneme. In Homo sapiens (Human), this protein is Intraflagellar transport protein 56.